The sequence spans 398 residues: Interleukin-1 receptor type 2 (398 aa).

An N-terminal signal peptide occupies residues 1-13 (MLRLYVLVMGVSA). The Extracellular segment spans residues 14–343 (FTLQPAAHTG…FQTLRTTVKE (330 aa)). Ig-like C2-type domains are found at residues 18–124 (PAAH…IELR), 134–223 (PFIS…ITRS), and 237–349 (PVII…STFS). Intrachain disulfides connect cysteine 28/cysteine 116, cysteine 50/cysteine 108, and cysteine 152/cysteine 207. N-linked (GlcNAc...) asparagine glycans are attached at residues asparagine 66, asparagine 72, and asparagine 112. 2 N-linked (GlcNAc...) asparagine glycosylation sites follow: asparagine 219 and asparagine 277. Cysteine 258 and cysteine 326 form a disulfide bridge. Residues 329-343 (HNTLSFQTLRTTVKE) are contains proteolytic cleavage site. The helical transmembrane segment at 344-369 (ASSTFSWGIVLAPLSLAFLVLGGIWM) threads the bilayer. The Cytoplasmic segment spans residues 370 to 398 (HRRCKHRTGKADGLTVLWPHHQDFQSYPK).

The protein belongs to the interleukin-1 receptor family. In terms of assembly, associates with IL1RAP to form a non-signaling interleukin-1 receptor complex. A soluble form (sIL1R2) can also be produced by proteolytic cleavage at the cell surface (shedding) involving a metalloproteinase; hovever, several sIL1R2 forms ranging from 45 and 60 kDa are reported.

It localises to the secreted. The protein resides in the cell membrane. Its function is as follows. Non-signaling receptor for IL1A, IL1B and IL1RN. Reduces IL1B activities. Serves as a decoy receptor by competitive binding to IL1B and preventing its binding to IL1R1. Also modulates cellular response through non-signaling association with IL1RAP after binding to IL1B. IL1R2 (membrane and secreted forms) preferentially binds IL1B and poorly IL1A and IL1RN. The secreted IL1R2 recruits secreted IL1RAP with high affinity; this complex formation may be the dominant mechanism for neutralization of IL1B by secreted/soluble receptors. The sequence is that of Interleukin-1 receptor type 2 (IL1R2) from Homo sapiens (Human).